Here is a 245-residue protein sequence, read N- to C-terminus: Carbohydrate deacetylase (245 aa).

Mg(2+) contacts are provided by histidine 59 and histidine 125.

This sequence belongs to the YdjC deacetylase family. As to quaternary structure, homodimer. Mg(2+) is required as a cofactor.

Probably catalyzes the deacetylation of acetylated carbohydrates an important step in the degradation of oligosaccharides. The sequence is that of Carbohydrate deacetylase from Listeria welshimeri serovar 6b (strain ATCC 35897 / DSM 20650 / CCUG 15529 / CIP 8149 / NCTC 11857 / SLCC 5334 / V8).